Here is a 626-residue protein sequence, read N- to C-terminus: MSQNQETRGFQSEVKQLLQLMIHSLYSNKEIFLRELISNASDAADKLRFKALSNPALYEGDGDLRVRVSFDADKGTITISDNGIGMTREQVIDHLGTIAKSGTKEFLTALGQDQAKNSQLIGQFGVGFYSAFIVADKVTVKTRAAGEEADKAVLWESAGEGEYSVADIEKKSRGTDVILHLCEDEKEFLNEWRLREIIGKYSDHIGLPVEMLTKEYDDEGKECGEKWEKINKSDALWTRSKNDVSDEEYKAFYKHLSHDFADPVTWAHNKVEGNQAYTSLLYVPAKAPWDLFNREHKHGLKLYVQRVFIMDDAEQFMPNYLRFMRGLIDSNDLPLNVSREILQDNKITAALRKALTKRSLQMLEKLAKDDAEKYLQFWKEFGLVLKEGPTEDFANKETVAKLLRFASTHNDGSEQAVSLEDYILRMKEGQKAIYYITADSYVAAKNSPHLELFNKKGIEVLLLSDRIDEWMLSYLTEFDGKQLQSITKADLDLGDLADKESETQKQQDEAFGSFIERVKNLLGERVKTVRLTHNLTDTPAVVSTDNDQMTTQMAKLFAAAGQPVPEVKYTFELNPEHHLVKKVADIADETEFADWVELLLEQAMLAERGSLENPAAFIKRINKLLG.

The a; substrate-binding stretch occupies residues 1-339; that stretch reads MSQNQETRGF…SNDLPLNVSR (339 aa). Residues 340–555 are b; the sequence is EILQDNKITA…NDQMTTQMAK (216 aa). The c stretch occupies residues 556–626; sequence LFAAAGQPVP…FIKRINKLLG (71 aa).

Belongs to the heat shock protein 90 family. As to quaternary structure, homodimer.

The protein resides in the cytoplasm. In terms of biological role, molecular chaperone. Has ATPase activity. The sequence is that of Chaperone protein HtpG from Haemophilus influenzae (strain PittEE).